The primary structure comprises 278 residues: 4-deoxy-L-threo-5-hexosulose-uronate ketol-isomerase (278 aa).

Zn(2+)-binding residues include H196, H198, E203, and H245.

Belongs to the KduI family. Requires Zn(2+) as cofactor.

It carries out the reaction 5-dehydro-4-deoxy-D-glucuronate = 3-deoxy-D-glycero-2,5-hexodiulosonate. It functions in the pathway glycan metabolism; pectin degradation; 2-dehydro-3-deoxy-D-gluconate from pectin: step 4/5. Catalyzes the isomerization of 5-dehydro-4-deoxy-D-glucuronate to 3-deoxy-D-glycero-2,5-hexodiulosonate. The protein is 4-deoxy-L-threo-5-hexosulose-uronate ketol-isomerase of Salmonella heidelberg (strain SL476).